Reading from the N-terminus, the 275-residue chain is Diaminopimelate epimerase (275 aa).

N13, Q46, and N66 together coordinate substrate. The active-site Proton donor is C75. Substrate is bound by residues 76-77, N159, N192, and 210-211; these read GN and ER. Catalysis depends on C219, which acts as the Proton acceptor. 220–221 serves as a coordination point for substrate; it reads GT.

Belongs to the diaminopimelate epimerase family. In terms of assembly, homodimer.

The protein resides in the cytoplasm. The enzyme catalyses (2S,6S)-2,6-diaminopimelate = meso-2,6-diaminopimelate. The protein operates within amino-acid biosynthesis; L-lysine biosynthesis via DAP pathway; DL-2,6-diaminopimelate from LL-2,6-diaminopimelate: step 1/1. Its function is as follows. Catalyzes the stereoinversion of LL-2,6-diaminopimelate (L,L-DAP) to meso-diaminopimelate (meso-DAP), a precursor of L-lysine and an essential component of the bacterial peptidoglycan. The polypeptide is Diaminopimelate epimerase (Psychromonas ingrahamii (strain DSM 17664 / CCUG 51855 / 37)).